A 185-amino-acid chain; its full sequence is Ribosome-recycling factor (185 aa).

This sequence belongs to the RRF family.

The protein resides in the cytoplasm. Its function is as follows. Responsible for the release of ribosomes from messenger RNA at the termination of protein biosynthesis. May increase the efficiency of translation by recycling ribosomes from one round of translation to another. This chain is Ribosome-recycling factor, found in Streptococcus mutans serotype c (strain ATCC 700610 / UA159).